A 353-amino-acid polypeptide reads, in one-letter code: Cruciform cutting endonuclease 1, mitochondrial (353 aa).

Mg(2+) is bound by residues Asp-293 and Asp-294.

In terms of assembly, homodimer. It depends on Mg(2+) as a cofactor.

The protein localises to the mitochondrion. The enzyme catalyses Endonucleolytic cleavage at a junction such as a reciprocal single-stranded crossover between two homologous DNA duplexes (Holliday junction).. Capable of resolving Holliday junctions. Specific for 4-way junctions. Seems to be important for the maintenance of mitochondrial DNA. Cleaves fixed junctions at the point of strand exchange. Cleaves after 5'-CT-3' sequence. The protein is Cruciform cutting endonuclease 1, mitochondrial (CCE1) of Saccharomyces cerevisiae (strain ATCC 204508 / S288c) (Baker's yeast).